Reading from the N-terminus, the 230-residue chain is Urease accessory protein UreE (230 aa).

Composition is skewed to basic and acidic residues over residues 182 to 193 and 204 to 230; these read HVHVDSPLDEPH and SHGDGHSHSHSHDHDHDHRHDDHDHKH. The disordered stretch occupies residues 182-230; it reads HVHVDSPLDEPHGSGLHVHAIHSHGDGHSHSHSHDHDHDHRHDDHDHKH.

The protein belongs to the UreE family.

The protein resides in the cytoplasm. Involved in urease metallocenter assembly. Binds nickel. Probably functions as a nickel donor during metallocenter assembly. This is Urease accessory protein UreE from Yersinia mollaretii.